The primary structure comprises 80 residues: Adipogenin (80 aa).

The helical transmembrane segment at 16 to 36 (FLVFWLCLPVALLLFLTIVWL) threads the bilayer. A Phosphoserine modification is found at serine 63.

Belongs to the adipogenin family. Selectively expressed in adipose tissue where it is particularly enriched in brown adipose tissue. In adipose tissue, expressed exclusively in adipocytes and not in the stromal-vascular cell population. Expressed at much lower levels in heart, stomach and muscle and barely detected in kidney and lung.

It localises to the membrane. It is found in the nucleus. Functionally, plays a role in stimulating adipocyte differentiation and development. The sequence is that of Adipogenin (Adig) from Mus musculus (Mouse).